Here is a 146-residue protein sequence, read N- to C-terminus: D-aminoacyl-tRNA deacylase (146 aa).

Positions 137 to 138 (GP) match the Gly-cisPro motif, important for rejection of L-amino acids motif.

It belongs to the DTD family. In terms of assembly, homodimer.

It is found in the cytoplasm. The enzyme catalyses glycyl-tRNA(Ala) + H2O = tRNA(Ala) + glycine + H(+). The catalysed reaction is a D-aminoacyl-tRNA + H2O = a tRNA + a D-alpha-amino acid + H(+). In terms of biological role, an aminoacyl-tRNA editing enzyme that deacylates mischarged D-aminoacyl-tRNAs. Also deacylates mischarged glycyl-tRNA(Ala), protecting cells against glycine mischarging by AlaRS. Acts via tRNA-based rather than protein-based catalysis; rejects L-amino acids rather than detecting D-amino acids in the active site. By recycling D-aminoacyl-tRNA to D-amino acids and free tRNA molecules, this enzyme counteracts the toxicity associated with the formation of D-aminoacyl-tRNA entities in vivo and helps enforce protein L-homochirality. This chain is D-aminoacyl-tRNA deacylase, found in Bacillus cytotoxicus (strain DSM 22905 / CIP 110041 / 391-98 / NVH 391-98).